Here is a 231-residue protein sequence, read N- to C-terminus: Uracil-DNA glycosylase (231 aa).

Aspartate 70 (proton acceptor) is an active-site residue.

The protein belongs to the uracil-DNA glycosylase (UDG) superfamily. UNG family.

It is found in the cytoplasm. It carries out the reaction Hydrolyzes single-stranded DNA or mismatched double-stranded DNA and polynucleotides, releasing free uracil.. Excises uracil residues from the DNA which can arise as a result of misincorporation of dUMP residues by DNA polymerase or due to deamination of cytosine. This is Uracil-DNA glycosylase from Pseudomonas fluorescens (strain Pf0-1).